We begin with the raw amino-acid sequence, 315 residues long: 1,2-dihydroxy-3,5-cyclohexadiene-1,4-dicarboxylate dehydrogenase (315 aa).

H159, H203, and H255 together coordinate a divalent metal cation.

Belongs to the PdxA family.

The catalysed reaction is (3S,4R)-3,4-dihydroxycyclohexa-1,5-diene-1,4-dicarboxylate + NAD(+) = 3,4-dihydroxybenzoate + CO2 + NADH. Functionally, involved in the degradation of terephthalate (TPA) via the protocatechuate (PCA) 4,5-cleavage pathway. Catalyzes the dehydrogenation of 1,2-dihydroxy-3,5-cyclohexadiene-1,4-dicarboxylate (DCD) to yield protocatechuate (PCA). In Comamonas sp, this protein is 1,2-dihydroxy-3,5-cyclohexadiene-1,4-dicarboxylate dehydrogenase (tphBI).